The sequence spans 152 residues: Protein-export protein SecB (152 aa).

The protein belongs to the SecB family. In terms of assembly, homotetramer, a dimer of dimers. One homotetramer interacts with 1 SecA dimer.

Its subcellular location is the cytoplasm. One of the proteins required for the normal export of preproteins out of the cell cytoplasm. It is a molecular chaperone that binds to a subset of precursor proteins, maintaining them in a translocation-competent state. It also specifically binds to its receptor SecA. This Rickettsia typhi (strain ATCC VR-144 / Wilmington) protein is Protein-export protein SecB.